The primary structure comprises 65 residues: Potassium channel toxin alpha-KTx 12.6 (65 aa).

The first 22 residues, 1–22, serve as a signal peptide directing secretion; it reads MKMKIFIITIVIALFITSIVEA. Disulfide bonds link C30–C51, C36–C56, and C40–C58.

The protein belongs to the short scorpion toxin superfamily. Potassium channel inhibitor family. Alpha-KTx 12 subfamily. As to expression, expressed by the venom gland.

The protein resides in the secreted. Inhibits voltage-gated potassium channels. The protein is Potassium channel toxin alpha-KTx 12.6 of Lychas mucronatus (Chinese swimming scorpion).